Consider the following 229-residue polypeptide: Cytidylate kinase (229 aa).

Residue Gly12–Thr20 participates in ATP binding.

The protein belongs to the cytidylate kinase family. Type 1 subfamily.

It localises to the cytoplasm. The enzyme catalyses CMP + ATP = CDP + ADP. It carries out the reaction dCMP + ATP = dCDP + ADP. The polypeptide is Cytidylate kinase (Pseudomonas syringae pv. syringae (strain B728a)).